A 169-amino-acid chain; its full sequence is Disulfide bond formation protein B (169 aa).

Residues 1 to 14 (MNNLTLSLHRERRL) lie on the Cytoplasmic side of the membrane. A helical membrane pass occupies residues 15–31 (LVLLGLVCLALLAGALY). Residues 32–49 (LQYVKNEDPCPLCIIQRY) are Periplasmic-facing. A disulfide bridge connects residues C41 and C44. The chain crosses the membrane as a helical span at residues 50–64 (FFVLIAVFAFIGAGM). Residues 65-71 (ASGAGIA) are Cytoplasmic-facing. The chain crosses the membrane as a helical span at residues 72–89 (VIEALIVLSAAAGVGTAA). Residues 90 to 144 (RHLYVQLNPGFSCGFDALQPVVDSLPPAHWLPGVFKVAGLCETVYPPIFGILLPG) lie on the Periplasmic side of the membrane. C102 and C130 are joined by a disulfide. A helical transmembrane segment spans residues 145–163 (WALIAFALIVVPVAASLLR). The Cytoplasmic segment spans residues 164–169 (HRGRLR).

It belongs to the DsbB family.

Its subcellular location is the cell inner membrane. Functionally, required for disulfide bond formation in some periplasmic proteins. Acts by oxidizing the DsbA protein. This Burkholderia thailandensis (strain ATCC 700388 / DSM 13276 / CCUG 48851 / CIP 106301 / E264) protein is Disulfide bond formation protein B.